The sequence spans 208 residues: FMN-dependent NADH:quinone oxidoreductase (208 aa).

FMN-binding positions include 17-19, 99-102, and 143-146; these read SNS, MWNL, and SRGG.

It belongs to the azoreductase type 1 family. In terms of assembly, homodimer. It depends on FMN as a cofactor.

The catalysed reaction is 2 a quinone + NADH + H(+) = 2 a 1,4-benzosemiquinone + NAD(+). The enzyme catalyses N,N-dimethyl-1,4-phenylenediamine + anthranilate + 2 NAD(+) = 2-(4-dimethylaminophenyl)diazenylbenzoate + 2 NADH + 2 H(+). Functionally, quinone reductase that provides resistance to thiol-specific stress caused by electrophilic quinones. Its function is as follows. Also exhibits azoreductase activity. Catalyzes the reductive cleavage of the azo bond in aromatic azo compounds to the corresponding amines. The protein is FMN-dependent NADH:quinone oxidoreductase of Staphylococcus haemolyticus (strain JCSC1435).